We begin with the raw amino-acid sequence, 200 residues long: Outer-membrane lipoprotein LolB (200 aa).

An N-terminal signal peptide occupies residues 1 to 18 (MRRGRLLIAGLAALVLSA). The N-palmitoyl cysteine moiety is linked to residue C19. The S-diacylglycerol cysteine moiety is linked to residue C19.

It belongs to the LolB family. In terms of assembly, monomer.

The protein localises to the cell outer membrane. Its function is as follows. Plays a critical role in the incorporation of lipoproteins in the outer membrane after they are released by the LolA protein. This is Outer-membrane lipoprotein LolB from Alkalilimnicola ehrlichii (strain ATCC BAA-1101 / DSM 17681 / MLHE-1).